We begin with the raw amino-acid sequence, 423 residues long: GPI mannosyltransferase 2 (423 aa).

Transmembrane regions (helical) follow at residues 11–31 (ILSLTSIFAAWKSFLLAIALG), 106–126 (WEALVAIAISHVSHLVAVLAL), 139–159 (LAYLASVVHVLSPAGLFISAP), 160–180 (YAESPFACMSFVGNLLYAISL), 197–219 (GLSYGISCTLRSNGLFGGVLFAV), 240–260 (LVAPLIGGILVAVGFVAPQVL), 299–319 (YWTPNQIPLFLLAAPMLTILL), 351–371 (LAAIQTLLAVLAITNYHVQII), and 400–420 (GVIVFITMYAAIQGGLFASFL).

The protein belongs to the PIGV family.

It localises to the endoplasmic reticulum membrane. The protein operates within glycolipid biosynthesis; glycosylphosphatidylinositol-anchor biosynthesis. Functionally, mannosyltransferase involved in glycosylphosphatidylinositol-anchor biosynthesis. Transfers the second mannose to the glycosylphosphatidylinositol during GPI precursor assembly. This Gibberella zeae (strain ATCC MYA-4620 / CBS 123657 / FGSC 9075 / NRRL 31084 / PH-1) (Wheat head blight fungus) protein is GPI mannosyltransferase 2 (GPI18).